Consider the following 269-residue polypeptide: Hydroxyethylthiazole kinase (269 aa).

Methionine 45 serves as a coordination point for substrate. Residues arginine 121 and threonine 167 each contribute to the ATP site. Glycine 194 contacts substrate.

Belongs to the Thz kinase family. It depends on Mg(2+) as a cofactor.

The catalysed reaction is 5-(2-hydroxyethyl)-4-methylthiazole + ATP = 4-methyl-5-(2-phosphooxyethyl)-thiazole + ADP + H(+). Its pathway is cofactor biosynthesis; thiamine diphosphate biosynthesis; 4-methyl-5-(2-phosphoethyl)-thiazole from 5-(2-hydroxyethyl)-4-methylthiazole: step 1/1. Catalyzes the phosphorylation of the hydroxyl group of 4-methyl-5-beta-hydroxyethylthiazole (THZ). The protein is Hydroxyethylthiazole kinase of Bacillus mycoides (strain KBAB4) (Bacillus weihenstephanensis).